The sequence spans 158 residues: Transcriptional repressor NrdR (158 aa).

The segment at Cys-3 to Cys-34 is a zinc-finger region. The region spanning Leu-49–Ser-139 is the ATP-cone domain.

It belongs to the NrdR family. Zn(2+) serves as cofactor.

Functionally, negatively regulates transcription of bacterial ribonucleotide reductase nrd genes and operons by binding to NrdR-boxes. This chain is Transcriptional repressor NrdR, found in Desulforamulus reducens (strain ATCC BAA-1160 / DSM 100696 / MI-1) (Desulfotomaculum reducens).